A 415-amino-acid polypeptide reads, in one-letter code: Eukaryotic initiation factor 4A-III (415 aa).

The Q motif motif lies at 42 to 70 (PTFDTMGLREDLLRGIYAYGFEKPSAIQQ). ATP contacts are provided by residues Lys-64, Gln-69, 86-93 (SQSGTGKT), and 89-94 (GTGKTA). Residues 73–243 (IKQIIKGRDV…NKFMTDPIRI (171 aa)) enclose the Helicase ATP-binding domain. A DEAD box motif is present at residues 191–194 (DEAD). Residues 254–415 (GIKQFFVAVE…EMPMNVADLI (162 aa)) enclose the Helicase C-terminal domain. ATP-binding positions include Asp-346 and 371 to 375 (RSGRY).

The protein belongs to the DEAD box helicase family. eIF4A subfamily. As to quaternary structure, identified in the spliceosome C complex. Part of the mRNA splicing-dependent exon junction complex (EJC) complex; the core complex contains casc3, eif4a3, magoh and rbm8a.

It localises to the nucleus. The protein localises to the nucleus speckle. Its subcellular location is the cytoplasm. The enzyme catalyses ATP + H2O = ADP + phosphate + H(+). Its function is as follows. ATP-dependent RNA helicase. Involved in pre-mRNA splicing as component of the spliceosome. Core component of the splicing-dependent multiprotein exon junction complex (EJC) deposited at splice junctions on mRNAs. The EJC is a dynamic structure consisting of core proteins and several peripheral nuclear and cytoplasmic associated factors that join the complex only transiently either during EJC assembly or during subsequent mRNA metabolism. The EJC marks the position of the exon-exon junction in the mature mRNA for the gene expression machinery and the core components remain bound to spliced mRNAs throughout all stages of mRNA metabolism thereby influencing downstream processes including nuclear mRNA export, subcellular mRNA localization, translation efficiency and nonsense-mediated mRNA decay (NMD). Binds spliced mRNA in sequence-independent manner, 20-24 nucleotides upstream of mRNA exon-exon junctions. Involved in craniofacial development. This chain is Eukaryotic initiation factor 4A-III (eif4a3), found in Xenopus tropicalis (Western clawed frog).